A 72-amino-acid chain; its full sequence is ATP synthase protein 8 (72 aa).

A helical transmembrane segment spans residues 16 to 36 (WTLIALFLLFSFLVVSVLPAV).

This sequence belongs to the ATPase protein 8 family. As to quaternary structure, F-type ATPases have 2 components, CF(1) - the catalytic core - and CF(0) - the membrane proton channel.

Its subcellular location is the mitochondrion membrane. Mitochondrial membrane ATP synthase (F(1)F(0) ATP synthase or Complex V) produces ATP from ADP in the presence of a proton gradient across the membrane which is generated by electron transport complexes of the respiratory chain. F-type ATPases consist of two structural domains, F(1) - containing the extramembraneous catalytic core and F(0) - containing the membrane proton channel, linked together by a central stalk and a peripheral stalk. During catalysis, ATP synthesis in the catalytic domain of F(1) is coupled via a rotary mechanism of the central stalk subunits to proton translocation. Part of the complex F(0) domain. Minor subunit located with subunit a in the membrane. This chain is ATP synthase protein 8 (MTATP8), found in Metridium senile (Brown sea anemone).